The chain runs to 185 residues: MWMETAVIGGGCFWCVEAVLRELNGVASIRPGYAGGHTANPTYKEVCTGTTFHAEVVEVTFDPAILSYVDLLRIFLTIHDPTTPNRQGADVGTQYRSVIMPASTEQENAARGVLAEVEAAQIWQAPLSTTIEPLQIFYPAEPEHVDYFARHPEAAYCQAVIAPKVRAFRKHAADHVRANISPNHA.

The active site involves cysteine 12.

This sequence belongs to the MsrA Met sulfoxide reductase family.

The catalysed reaction is L-methionyl-[protein] + [thioredoxin]-disulfide + H2O = L-methionyl-(S)-S-oxide-[protein] + [thioredoxin]-dithiol. It carries out the reaction [thioredoxin]-disulfide + L-methionine + H2O = L-methionine (S)-S-oxide + [thioredoxin]-dithiol. In terms of biological role, has an important function as a repair enzyme for proteins that have been inactivated by oxidation. Catalyzes the reversible oxidation-reduction of methionine sulfoxide in proteins to methionine. The polypeptide is Peptide methionine sulfoxide reductase MsrA (Granulibacter bethesdensis (strain ATCC BAA-1260 / CGDNIH1)).